A 529-amino-acid polypeptide reads, in one-letter code: Bifunctional purine biosynthesis protein PurH (529 aa).

In terms of domain architecture, MGS-like spans 1–148 (MNNARPIRRA…KNHKDTTIIV (148 aa)).

This sequence belongs to the PurH family.

The enzyme catalyses (6R)-10-formyltetrahydrofolate + 5-amino-1-(5-phospho-beta-D-ribosyl)imidazole-4-carboxamide = 5-formamido-1-(5-phospho-D-ribosyl)imidazole-4-carboxamide + (6S)-5,6,7,8-tetrahydrofolate. It carries out the reaction IMP + H2O = 5-formamido-1-(5-phospho-D-ribosyl)imidazole-4-carboxamide. It functions in the pathway purine metabolism; IMP biosynthesis via de novo pathway; 5-formamido-1-(5-phospho-D-ribosyl)imidazole-4-carboxamide from 5-amino-1-(5-phospho-D-ribosyl)imidazole-4-carboxamide (10-formyl THF route): step 1/1. Its pathway is purine metabolism; IMP biosynthesis via de novo pathway; IMP from 5-formamido-1-(5-phospho-D-ribosyl)imidazole-4-carboxamide: step 1/1. In Shewanella piezotolerans (strain WP3 / JCM 13877), this protein is Bifunctional purine biosynthesis protein PurH.